The sequence spans 296 residues: 4-hydroxybenzoate octaprenyltransferase (296 aa).

Helical transmembrane passes span 28-48 (PIGIYLLLWPTLSAVWIAGNG), 52-72 (LANVLIFGLGVVLMRAAGCCI), 102-122 (ALALFAMLVGVSFLLVLCTNS), 145-167 (TYYPQVVLGAAYSWGIPMAFTAA), 174-196 (SAWLLYIANLLWTVGYDTYYAMV), 219-239 (NIILTLQLLSLGCLLLAGSRF), 241-261 (LGGWFHLGLLGAAACFAWEYW), and 275-295 (FLHNHWAGLLVFIGVVLDYAF).

Belongs to the UbiA prenyltransferase family. The cofactor is Mg(2+).

The protein localises to the cell inner membrane. The enzyme catalyses all-trans-octaprenyl diphosphate + 4-hydroxybenzoate = 4-hydroxy-3-(all-trans-octaprenyl)benzoate + diphosphate. It participates in cofactor biosynthesis; ubiquinone biosynthesis. In terms of biological role, catalyzes the prenylation of para-hydroxybenzoate (PHB) with an all-trans polyprenyl group. Mediates the second step in the final reaction sequence of ubiquinone-8 (UQ-8) biosynthesis, which is the condensation of the polyisoprenoid side chain with PHB, generating the first membrane-bound Q intermediate 3-octaprenyl-4-hydroxybenzoate. The protein is 4-hydroxybenzoate octaprenyltransferase of Pseudomonas putida (strain GB-1).